Here is a 432-residue protein sequence, read N- to C-terminus: Bifunctional protein GlmU (432 aa).

Positions 1–223 are pyrophosphorylase; it reads MGKKSIIILA…EENFKGVNSK (223 aa). Residues 9-12, K23, Q75, and 82-83 contribute to the UDP-N-acetyl-alpha-D-glucosamine site; these read LAAG and GT. D103 contributes to the Mg(2+) binding site. Positions 135, 149, 164, and 221 each coordinate UDP-N-acetyl-alpha-D-glucosamine. Mg(2+) is bound at residue N221. The interval 224–244 is linker; it reads VELADAEVIHQNRIKKEFMKA. The segment at 245-432 is N-acetyltransferase; it reads GVIMRLPDTI…FYKHFSSKKK (188 aa). Residues R308 and K325 each contribute to the UDP-N-acetyl-alpha-D-glucosamine site. The Proton acceptor role is filled by H336. Residues Y339 and N350 each contribute to the UDP-N-acetyl-alpha-D-glucosamine site. Residues 359–360, S378, A396, and R413 each bind acetyl-CoA; that span reads NY.

It in the N-terminal section; belongs to the N-acetylglucosamine-1-phosphate uridyltransferase family. This sequence in the C-terminal section; belongs to the transferase hexapeptide repeat family. As to quaternary structure, homotrimer. It depends on Mg(2+) as a cofactor.

The protein resides in the cytoplasm. The catalysed reaction is alpha-D-glucosamine 1-phosphate + acetyl-CoA = N-acetyl-alpha-D-glucosamine 1-phosphate + CoA + H(+). It carries out the reaction N-acetyl-alpha-D-glucosamine 1-phosphate + UTP + H(+) = UDP-N-acetyl-alpha-D-glucosamine + diphosphate. Its pathway is nucleotide-sugar biosynthesis; UDP-N-acetyl-alpha-D-glucosamine biosynthesis; N-acetyl-alpha-D-glucosamine 1-phosphate from alpha-D-glucosamine 6-phosphate (route II): step 2/2. It functions in the pathway nucleotide-sugar biosynthesis; UDP-N-acetyl-alpha-D-glucosamine biosynthesis; UDP-N-acetyl-alpha-D-glucosamine from N-acetyl-alpha-D-glucosamine 1-phosphate: step 1/1. The protein operates within bacterial outer membrane biogenesis; LPS lipid A biosynthesis. Catalyzes the last two sequential reactions in the de novo biosynthetic pathway for UDP-N-acetylglucosamine (UDP-GlcNAc). The C-terminal domain catalyzes the transfer of acetyl group from acetyl coenzyme A to glucosamine-1-phosphate (GlcN-1-P) to produce N-acetylglucosamine-1-phosphate (GlcNAc-1-P), which is converted into UDP-GlcNAc by the transfer of uridine 5-monophosphate (from uridine 5-triphosphate), a reaction catalyzed by the N-terminal domain. The polypeptide is Bifunctional protein GlmU (Aliarcobacter butzleri (strain RM4018) (Arcobacter butzleri)).